We begin with the raw amino-acid sequence, 439 residues long: Beta-conglycinin beta subunit 1 (439 aa).

Positions 1 to 23 (MMRVRFPLLVLLGTVFLASVCVS) are cleaved as a signal peptide. 2 consecutive Cupin type-1 domains span residues 34–193 (FYLR…EEIN) and 240–401 (FNLR…QDVE). An N-linked (GlcNAc...) asparagine glycan is attached at asparagine 351. The disordered stretch occupies residues 411–439 (YFVDAQPQQKEEGSKGRKGPFPSILGALY). Positions 430–439 (PFPSILGALY) are necessary for sorting to protein storage vacuole.

Belongs to the 7S seed storage protein family. As to quaternary structure, the alpha-, alpha'-, and beta-subunits associate in various combinations to form trimeric proteins. In terms of processing, the N-linked glycans are not essential for the folding and assembly into trimers. In terms of tissue distribution, expressed in seeds. Not detected in cotyledons or in mature plants.

The protein localises to the vacuole. It is found in the aleurone grain. It localises to the endoplasmic reticulum. The protein resides in the protein storage vacuole. Its function is as follows. Seed storage protein. Accumulates during seed development and is hydrolyzed after germination to provide a carbon and nitrogen source for the developing seedling. The polypeptide is Beta-conglycinin beta subunit 1 (Glycine max (Soybean)).